A 228-amino-acid polypeptide reads, in one-letter code: Endonuclease V (228 aa).

2 residues coordinate Mg(2+): D36 and D104.

This sequence belongs to the endonuclease V family. It depends on Mg(2+) as a cofactor.

It is found in the cytoplasm. The catalysed reaction is Endonucleolytic cleavage at apurinic or apyrimidinic sites to products with a 5'-phosphate.. Its function is as follows. DNA repair enzyme involved in the repair of deaminated bases. Selectively cleaves double-stranded DNA at the second phosphodiester bond 3' to a deoxyinosine leaving behind the intact lesion on the nicked DNA. The sequence is that of Endonuclease V from Serratia proteamaculans (strain 568).